The primary structure comprises 252 residues: Ribonuclease HII (252 aa).

The RNase H type-2 domain occupies 41-232 (LLVAGVDEAG…VRLALEGREQ (192 aa)). A divalent metal cation contacts are provided by Asp47, Glu48, and Asp140.

The protein belongs to the RNase HII family. It depends on Mn(2+) as a cofactor. The cofactor is Mg(2+).

It localises to the cytoplasm. It catalyses the reaction Endonucleolytic cleavage to 5'-phosphomonoester.. In terms of biological role, endonuclease that specifically degrades the RNA of RNA-DNA hybrids. This Xanthomonas oryzae pv. oryzae (strain KACC10331 / KXO85) protein is Ribonuclease HII.